The primary structure comprises 68 residues: Conotoxin mr3g (68 aa).

An N-terminal signal peptide occupies residues 1–19 (MSKLGVLLTICLLLFALTA). A propeptide spanning residues 20-51 (VPLDGDQPADRPAERMQDDISSERHPMFDAVR) is cleaved from the precursor. Intrachain disulfides connect C53-C67, C54-C63, and C59-C66. 4-hydroxyproline is present on residues P55 and P65. C67 carries the post-translational modification Cysteine amide.

In terms of tissue distribution, expressed by the venom duct.

The protein resides in the secreted. Functionally, intracranially injection into mice does not elicit symptoms. In Conus marmoreus (Marble cone), this protein is Conotoxin mr3g.